Here is a 227-residue protein sequence, read N- to C-terminus: DNA mismatch repair protein MutH (227 aa).

Belongs to the MutH family.

The protein localises to the cytoplasm. In terms of biological role, sequence-specific endonuclease that cleaves unmethylated GATC sequences. It is involved in DNA mismatch repair. This Vibrio vulnificus (strain CMCP6) protein is DNA mismatch repair protein MutH.